Here is a 196-residue protein sequence, read N- to C-terminus: MSLLTRRLKPYYEELLEPLVNFFGKYNVSPNLITLFGLFLVGLGSFFLYLENLILAFLLLLLGALADSIDGALARRLNLKTEFGAFLDSTVDRFSDALPFTALGVHYASYGDETGVLLSFLALISSFGVSYTRARAESLGVYGLGGVFERTERWIVLLGSILLGLLKLGLFIITLGSLITVFQRVYETKKALEVKR.

It belongs to the CDP-alcohol phosphatidyltransferase class-I family.

This is an uncharacterized protein from Aquifex aeolicus (strain VF5).